The sequence spans 37 residues: Large ribosomal subunit protein bL36 (37 aa).

Belongs to the bacterial ribosomal protein bL36 family.

The chain is Large ribosomal subunit protein bL36 from Trichlorobacter lovleyi (strain ATCC BAA-1151 / DSM 17278 / SZ) (Geobacter lovleyi).